We begin with the raw amino-acid sequence, 196 residues long: Orotate phosphoribosyltransferase (196 aa).

117-125 (EDVVTTGLS) lines the 5-phospho-alpha-D-ribose 1-diphosphate pocket. Orotate-binding residues include Thr121 and Arg149.

This sequence belongs to the purine/pyrimidine phosphoribosyltransferase family. PyrE subfamily. As to quaternary structure, homodimer. Mg(2+) serves as cofactor.

The enzyme catalyses orotidine 5'-phosphate + diphosphate = orotate + 5-phospho-alpha-D-ribose 1-diphosphate. Its pathway is pyrimidine metabolism; UMP biosynthesis via de novo pathway; UMP from orotate: step 1/2. Functionally, catalyzes the transfer of a ribosyl phosphate group from 5-phosphoribose 1-diphosphate to orotate, leading to the formation of orotidine monophosphate (OMP). The sequence is that of Orotate phosphoribosyltransferase from Sphingopyxis alaskensis (strain DSM 13593 / LMG 18877 / RB2256) (Sphingomonas alaskensis).